The primary structure comprises 203 residues: Casparian strip membrane protein 1 (203 aa).

Residue A2 is modified to N-acetylalanine. At 2-40 the chain is on the cytoplasmic side; it reads AKESTTIDVGEPSTVTKSSSHVVKKKGFVAAAAGGGAKR. A helical membrane pass occupies residues 41-61; the sequence is GLAIFDFLLRLAAIGVTIGAA. The Extracellular segment spans residues 62-92; that stretch reads SVMYTAQETLPFFTQFLQFQAGYDDLPAFQY. Residues 93–113 traverse the membrane as a helical segment; the sequence is FVIAVAIVASYLVLSLPFSIV. Residues 114–124 are Cytoplasmic-facing; the sequence is TIVRPLAVAPR. The helical transmembrane segment at 125-145 threads the bilayer; it reads LILLIFDTLVVTLNTSAAAAA. At 146 to 177 the chain is on the extracellular side; it reads ASIVYLAHNGNQSTNWLPICQQFGDFCQNVST. N-linked (GlcNAc...) asparagine glycans are attached at residues N156 and N174. Residues 178 to 198 form a helical membrane-spanning segment; it reads AVVAASIAILFFIVLIIISAI. At 199 to 203 the chain is on the cytoplasmic side; the sequence is ALKRH.

It belongs to the Casparian strip membrane proteins (CASP) family. Homodimer and heterodimers.

It localises to the cell membrane. Regulates membrane-cell wall junctions and localized cell wall deposition. Required for establishment of the Casparian strip membrane domain (CSD) and the subsequent formation of Casparian strips, a cell wall modification of the root endodermis that determines an apoplastic barrier between the intraorganismal apoplasm and the extraorganismal apoplasm and prevents lateral diffusion. The protein is Casparian strip membrane protein 1 of Arabidopsis lyrata subsp. lyrata (Lyre-leaved rock-cress).